The following is a 264-amino-acid chain: Osteopontin (264 aa).

The first 16 residues, 1–16 (MKLAFLCLCFISIAAA), serve as a signal peptide directing secretion. Disordered regions lie at residues 21–141 (KSRQ…RGDS) and 166–264 (IEDD…EVTR). Over residues 31-51 (SEEKYDPRSHHTHRYHQDHVD) the composition is skewed to basic and acidic residues. The segment covering 52 to 73 (SQSQEHLQQTQNDLASLQQTHY) has biased composition (polar residues). Over residues 97–118 (AVDDDDDDDNDSNDTDESDEVV) the composition is skewed to acidic residues. N106 and N109 each carry an N-linked (GlcNAc...) asparagine glycan. The Cell attachment site signature appears at 132–134 (RGD). Residues 186-212 (KESREQDSRELAQHQSVENDSRPRFDS) are compositionally biased toward basic and acidic residues. N204 and N242 each carry an N-linked (GlcNAc...) asparagine glycan. Residues 233-246 (ASRSAVDTSNQTLE) are compositionally biased toward polar residues. The span at 252 to 264 (EDRHSIENNEVTR) shows a compositional bias: basic and acidic residues.

The protein belongs to the osteopontin family. Post-translationally, extensively phosphorylated on serine residues.

The protein localises to the secreted. Its function is as follows. Major non-collagenous bone protein that binds tightly to hydroxyapatite. Appears to form an integral part of the mineralized matrix. Probably important to cell-matrix interaction. Acts as a cytokine involved in enhancing production of interferon-gamma and interleukin-12 and reducing production of interleukin-10 and is essential in the pathway that leads to type I immunity. The polypeptide is Osteopontin (SPP1) (Gallus gallus (Chicken)).